Reading from the N-terminus, the 432-residue chain is Serine hydroxymethyltransferase (432 aa).

Residues leucine 127 and 131–133 each bind (6S)-5,6,7,8-tetrahydrofolate; that span reads GHL. Position 236 is an N6-(pyridoxal phosphate)lysine (lysine 236).

This sequence belongs to the SHMT family. In terms of assembly, homodimer. Pyridoxal 5'-phosphate is required as a cofactor.

The protein localises to the cytoplasm. It carries out the reaction (6R)-5,10-methylene-5,6,7,8-tetrahydrofolate + glycine + H2O = (6S)-5,6,7,8-tetrahydrofolate + L-serine. Its pathway is one-carbon metabolism; tetrahydrofolate interconversion. It participates in amino-acid biosynthesis; glycine biosynthesis; glycine from L-serine: step 1/1. Its function is as follows. Catalyzes the reversible interconversion of serine and glycine with tetrahydrofolate (THF) serving as the one-carbon carrier. This reaction serves as the major source of one-carbon groups required for the biosynthesis of purines, thymidylate, methionine, and other important biomolecules. Also exhibits THF-independent aldolase activity toward beta-hydroxyamino acids, producing glycine and aldehydes, via a retro-aldol mechanism. This Rhizobium rhizogenes (strain K84 / ATCC BAA-868) (Agrobacterium radiobacter) protein is Serine hydroxymethyltransferase.